The following is a 166-amino-acid chain: Transcriptional repressor NrdR (166 aa).

A zinc finger spans residues 3-34 (CPHCHHNGSRVVDSRPTDDGRVIRRRRECESC). The ATP-cone domain occupies 49 to 139 (LLVIKKNGTR…VYRQFKDTGV (91 aa)).

The protein belongs to the NrdR family. It depends on Zn(2+) as a cofactor.

In terms of biological role, negatively regulates transcription of bacterial ribonucleotide reductase nrd genes and operons by binding to NrdR-boxes. In Levilactobacillus brevis (strain ATCC 367 / BCRC 12310 / CIP 105137 / JCM 1170 / LMG 11437 / NCIMB 947 / NCTC 947) (Lactobacillus brevis), this protein is Transcriptional repressor NrdR.